A 188-amino-acid polypeptide reads, in one-letter code: MVSISNVSRGAIIRWNGAPHSIESLVHRTPGNLRAFYQASMKNLKTGRNVEYRFSATEQVDVIVTERKKYQYLYRDGEDYVMMDTETFDQINVPEVAIGPASRFLKDSVMVDIVFADDGSILEVELPTFVELEVTETSPASKDDRATSGTKPAIVETGAEVNVPMFIQTGSIIRIDTRSGEYMERVKK.

The protein belongs to the elongation factor P family.

The protein localises to the cytoplasm. The protein operates within protein biosynthesis; polypeptide chain elongation. Functionally, involved in peptide bond synthesis. Stimulates efficient translation and peptide-bond synthesis on native or reconstituted 70S ribosomes in vitro. Probably functions indirectly by altering the affinity of the ribosome for aminoacyl-tRNA, thus increasing their reactivity as acceptors for peptidyl transferase. The chain is Elongation factor P from Chlorobaculum tepidum (strain ATCC 49652 / DSM 12025 / NBRC 103806 / TLS) (Chlorobium tepidum).